We begin with the raw amino-acid sequence, 432 residues long: Phytase AppA (432 aa).

A signal peptide spans 1-22 (MKAILIPFLSLLIPLTPQSAFA). Position 38 (Arg38) interacts with 1D-myo-inositol hexakisphosphate. Residue His39 is the Nucleophile of the active site. 1D-myo-inositol hexakisphosphate is bound by residues 42–46 (RAPTK) and Arg114. 4 disulfides stabilise this stretch: Cys99-Cys130, Cys155-Cys430, Cys200-Cys210, and Cys404-Cys413. 1D-myo-inositol hexakisphosphate-binding positions include Arg289 and 325–327 (HDT). The active-site Proton donor is Asp326.

The protein belongs to the histidine acid phosphatase family. As to quaternary structure, monomer.

It is found in the periplasm. It catalyses the reaction 1D-myo-inositol hexakisphosphate + H2O = 1D-myo-inositol 1,2,3,4,5-pentakisphosphate + phosphate. The catalysed reaction is 1D-myo-inositol 1,2,3,4,5-pentakisphosphate + H2O = 1D-myo-inositol 2,3,4,5-tetrakisphosphate + phosphate. The enzyme catalyses 1D-myo-inositol 2,3,4,5-tetrakisphosphate + H2O = 1D-myo-inositol 2,4,5-triphosphate + phosphate. It carries out the reaction 1D-myo-inositol 2,4,5-triphosphate + H2O = 1D-myo-inositol 2,5-bisphosphate + phosphate. It catalyses the reaction 1D-myo-inositol 2,5-bisphosphate + H2O = 1D-myo-inositol 2-phosphate + phosphate. The catalysed reaction is GTP + H2O = GDP + phosphate + H(+). Its activity is regulated as follows. Contains three consecutive and one non-consecutive disulfide bonds and shows a strong dependence on DsbC for its full activity. Competitively inhibited by tartaric acid and by sodium fluorid. Its function is as follows. Catalyzes the hydrolysis of phytate (or myo-inositol hexakisphosphate, an indigestible organic form of phosphorus that is found in many plant tissues) to myo-inositol and inorganic phosphate. Dephosphorylates phytate in a stereospecific way by sequential removal of phosphate groups to produce myo-inositol 2-monophosphate. Also shows phosphoanhydride phosphatase activity and hydrolyzes the distal phosphoryl residues of GTP, the 5'-beta-phosphoryl residue of the regulatory nucleotide ppGpp and tripolyphosphates. Does not split most phosphomonoesters with the exception of the synthetic substrate p-nitrophenyl phosphate (pNPP), 2,3-bisphosphoglycerate and fructose 1,6-bisphosphate. This is Phytase AppA from Escherichia coli (strain K12).